The sequence spans 328 residues: Phosphate acyltransferase (328 aa).

This sequence belongs to the PlsX family. Homodimer. Probably interacts with PlsY.

Its subcellular location is the cytoplasm. The catalysed reaction is a fatty acyl-[ACP] + phosphate = an acyl phosphate + holo-[ACP]. The protein operates within lipid metabolism; phospholipid metabolism. Functionally, catalyzes the reversible formation of acyl-phosphate (acyl-PO(4)) from acyl-[acyl-carrier-protein] (acyl-ACP). This enzyme utilizes acyl-ACP as fatty acyl donor, but not acyl-CoA. The protein is Phosphate acyltransferase of Staphylococcus saprophyticus subsp. saprophyticus (strain ATCC 15305 / DSM 20229 / NCIMB 8711 / NCTC 7292 / S-41).